The following is a 743-amino-acid chain: F-box protein COS111 (743 aa).

The F-box domain maps to 145 to 191; sequence ELHIKNLPVEILDYIFYLVDDNLDYKSCMYTCKLFYFLAKPYYYENL. Disordered stretches follow at residues 224–257 and 311–330; these read IKPG…DPQY and FSNV…SSST. A compositionally biased stretch (acidic residues) spans 229 to 248; it reads DEDEQEEGQEENAENGEEEN.

Functionally, F-box protein probably involved in ubiquitin conjugation pathway. This Candida albicans (strain SC5314 / ATCC MYA-2876) (Yeast) protein is F-box protein COS111 (COS111).